The primary structure comprises 567 residues: Oxygen-dependent choline dehydrogenase (567 aa).

6-35 (DYIIVGAGSAGNTLATRLTEDEGVTVLLLE) serves as a coordination point for FAD. Residue histidine 475 is the Proton acceptor of the active site.

This sequence belongs to the GMC oxidoreductase family. Requires FAD as cofactor.

The enzyme catalyses choline + A = betaine aldehyde + AH2. It carries out the reaction betaine aldehyde + NAD(+) + H2O = glycine betaine + NADH + 2 H(+). Its pathway is amine and polyamine biosynthesis; betaine biosynthesis via choline pathway; betaine aldehyde from choline (cytochrome c reductase route): step 1/1. Involved in the biosynthesis of the osmoprotectant glycine betaine. Catalyzes the oxidation of choline to betaine aldehyde and betaine aldehyde to glycine betaine at the same rate. The protein is Oxygen-dependent choline dehydrogenase of Pseudomonas fluorescens (strain Pf0-1).